We begin with the raw amino-acid sequence, 344 residues long: DNA-directed RNA polymerase subunit alpha (344 aa).

Positions 1–238 (MKVIKTAPLI…KQLGVFGERP (238 aa)) are alpha N-terminal domain (alpha-NTD). The tract at residues 253–344 (DAKDLSAKIE…EKLEDKGGND (92 aa)) is alpha C-terminal domain (alpha-CTD).

This sequence belongs to the RNA polymerase alpha chain family. As to quaternary structure, homodimer. The RNAP catalytic core consists of 2 alpha, 1 beta, 1 beta' and 1 omega subunit. When a sigma factor is associated with the core the holoenzyme is formed, which can initiate transcription.

It catalyses the reaction RNA(n) + a ribonucleoside 5'-triphosphate = RNA(n+1) + diphosphate. In terms of biological role, DNA-dependent RNA polymerase catalyzes the transcription of DNA into RNA using the four ribonucleoside triphosphates as substrates. In Helicobacter pylori (strain HPAG1), this protein is DNA-directed RNA polymerase subunit alpha.